We begin with the raw amino-acid sequence, 45 residues long: Large ribosomal subunit protein bL34c (45 aa).

The segment covering 1 to 10 (MSKGFSNGTN) has biased composition (polar residues). Residues 1-45 (MSKGFSNGTNIKRVRKSGFRARMSNSSGRKILNSRRRKQRKKIAL) are disordered. A compositionally biased stretch (basic residues) spans 32–45 (LNSRRRKQRKKIAL).

It belongs to the bacterial ribosomal protein bL34 family.

It is found in the plastid. The protein localises to the chloroplast. The polypeptide is Large ribosomal subunit protein bL34c (Gracilaria tenuistipitata var. liui (Red alga)).